Consider the following 111-residue polypeptide: Large ribosomal subunit protein uL22 (111 aa).

Belongs to the universal ribosomal protein uL22 family. As to quaternary structure, part of the 50S ribosomal subunit.

This protein binds specifically to 23S rRNA; its binding is stimulated by other ribosomal proteins, e.g. L4, L17, and L20. It is important during the early stages of 50S assembly. It makes multiple contacts with different domains of the 23S rRNA in the assembled 50S subunit and ribosome. Its function is as follows. The globular domain of the protein is located near the polypeptide exit tunnel on the outside of the subunit, while an extended beta-hairpin is found that lines the wall of the exit tunnel in the center of the 70S ribosome. This is Large ribosomal subunit protein uL22 from Legionella pneumophila (strain Lens).